The sequence spans 687 residues: C-mannosyltransferase dpy-19 (687 aa).

The next 11 helical transmembrane spans lie at 24 to 44 (GISGNLWLATVVLIGLFVGFL), 170 to 190 (ITGVFVVAGTVATSLFYLGVL), 191 to 211 (VSDSIFGGILSVLCFAFNHGE), 223 to 243 (ESFAFPFIIGHIAILTYIIKY), 253 to 273 (LLISAAVPALLFWQFTQFAFF), 276 to 296 (ICSIFAAFSMDLVPLDTAKTI), 303 to 323 (AFFISFVMLFGNEMMIAALYF), 324 to 344 (PSIWALATVIYISPMLAGIRL), 347 to 367 (LYLLILALIFGSITLGLKVGF), 415 to 435 (LSSTLLIPLALLSIGAFSWDF), and 454 to 474 (GEVIYNLVQLICSTTMAVLIM).

The protein belongs to the dpy-19 family.

It is found in the endoplasmic reticulum membrane. Its function is as follows. C-mannosyltransferase that mediates C-mannosylation of tryptophan residues on target proteins such as unc-5 and mig-21. Mediates the attachment of alpha-mannose in C-C linkage to the C2 of the indole ring of tryptophan. C-mannosylation takes place in the endoplasmic reticulum and frequently found in thrombospondin (TSP) type-1 repeats and in the WSXWS motif of type I cytokine receptors. Required to orient neuroblasts QL and QR correctly on the anterior/posterior (A/P) axis: QL and QR are born in the same A/P position, but polarize and migrate left/right asymmetrically, QL migrates toward the posterior and QR migrates toward the anterior. Required with unc-40 to express mab-5 correctly in the Q cell descendants. This Caenorhabditis briggsae protein is C-mannosyltransferase dpy-19.